A 351-amino-acid chain; its full sequence is Inositol monophosphatase 3 (351 aa).

The chain crosses the membrane as a helical span at residues 11–31 (LGIGVFCLLALGVLYHVYSGF). Residues Glu121, Asp162, Leu164, Asp165, and Asp288 each contribute to the Mg(2+) site. Glu121 provides a ligand contact to substrate. Residues 164 to 167 (LDAT) and Asp288 contribute to the substrate site.

The protein belongs to the inositol monophosphatase superfamily. It depends on Mg(2+) as a cofactor.

It localises to the membrane. It carries out the reaction a myo-inositol phosphate + H2O = myo-inositol + phosphate. It participates in polyol metabolism; myo-inositol biosynthesis; myo-inositol from D-glucose 6-phosphate: step 2/2. This is Inositol monophosphatase 3 (bpnt2) from Xenopus laevis (African clawed frog).